The chain runs to 235 residues: Eukaryotic translation initiation factor 4E-1 (235 aa).

Positions 1 to 52 (MVVEDSMKATSAEDLSNSIANQNPRGRGGDEDEELEEGEIVGDDDLDSSNLS) are disordered. A compositionally biased stretch (polar residues) spans 13–24 (EDLSNSIANQNP). The span at 30 to 47 (DEDEELEEGEIVGDDDLD) shows a compositional bias: acidic residues. 2 EIF4G-binding regions span residues 60 to 63 (HPLE) and 70 to 106 (FDNPSAKSKQATWGASIRPIYTFSTVEEFWSVYNNIH). Residues 78-83 (KQATWG), Lys-110, and 128-129 (WE) each bind mRNA. Cys-133 and Cys-171 are joined by a disulfide. The tract at residues 154-163 (YTLLAMIGEQ) is EIF4G-binding. MRNA is bound by residues 178-183 (RSGQDK) and 223-227 (KKFDR).

Belongs to the eukaryotic initiation factor 4E family. EIF4F is a multi-subunit complex, the composition of which varies with external and internal environmental conditions. It is composed of at least EIF4A, EIF4E and EIF4G. EIF4E is also known to interact with other partners. Interacts directly with eIF4G. In higher plants two isoforms of EIF4F have been identified, named isoform EIF4F and isoform EIF(iso)4F. Isoform EIF4F has subunits p220 and p26, whereas isoform EIF(iso)4F has subunits p82 and p28. As to quaternary structure, (Microbial infection) Interacts with potyvirus viral genome-linked protein (VPg); this interaction is possible in susceptible hosts but impaired in resistant plants. In terms of processing, according to the redox status, the Cys-133-Cys-171 disulfide bridge may have a role in regulating protein function by affecting its ability to bind capped mRNA.

It is found in the nucleus. The protein localises to the cytoplasm. In terms of biological role, component of the protein complex eIF4F, which is involved in the recognition of the mRNA cap, ATP-dependent unwinding of 5'-terminal secondary structure and recruitment of mRNA to the ribosome. Recognizes and binds the 7-methylguanosine-containing mRNA cap during an early step in the initiation of protein synthesis and facilitates ribosome binding by inducing the unwinding of the mRNAs secondary structures. Key component of recessive resistance to potyviruses and Tombusviridae genus Carmovirus such as melon necrotic spot virus (MNSV). Functionally, (Microbial infection) Susceptibility host factor required for viral infection by recruiting viral RNAs, including uncapped and non-polyadenylated RNA, to the host ribosomal complex via an interaction with viral genome-linked protein (VPg). The polypeptide is Eukaryotic translation initiation factor 4E-1 (Cucumis melo (Muskmelon)).